A 438-amino-acid polypeptide reads, in one-letter code: Trigger factor (438 aa).

Residues 160-231 (SDQVTIEEQG…IMDVKTKQLQ (72 aa)) enclose the PPIase FKBP-type domain. Residues 407–438 (AQLSGPQAETVAADQGEQQAEGQEESAEKSEE) are disordered. Residues 418–427 (AADQGEQQAE) show a composition bias toward low complexity.

The protein belongs to the FKBP-type PPIase family. Tig subfamily.

The protein resides in the cytoplasm. The enzyme catalyses [protein]-peptidylproline (omega=180) = [protein]-peptidylproline (omega=0). Its function is as follows. Involved in protein export. Acts as a chaperone by maintaining the newly synthesized protein in an open conformation. Functions as a peptidyl-prolyl cis-trans isomerase. This is Trigger factor from Deinococcus deserti (strain DSM 17065 / CIP 109153 / LMG 22923 / VCD115).